A 576-amino-acid polypeptide reads, in one-letter code: Insulin-like growth factor 2 mRNA-binding protein 1 (576 aa).

RRM domains lie at 2–75 (NKLY…HSVP) and 81–156 (RKIQ…YIPD). The disordered stretch occupies residues 158-189 (QSVQGPENGRRGGFGARGAPRQGSPVTAGAPV). 2 consecutive KH domains span residues 195–260 (DIPL…CKMI) and 276–343 (EVPL…EQEI). Tyrosine 396 is modified (phosphotyrosine; by SRC). 2 KH domains span residues 404 to 469 (QETV…QGRI) and 486 to 552 (KLET…QRKI).

It belongs to the RRM IMP/VICKZ family. Can form homooligomers and heterooligomers with IGF2BP1 and IGF2BP3 in an RNA-dependent manner. Associates with the cytoskeleton, predominantly with actin filament bundles and occasionally with microtubules. In a heterologous system, interacts with ELAVL1, DHX9 and HNRNPU. Phosphorylated by SRC at Tyr-396. This residue is involved in ACTB mRNA binding, its phosphorylation impairs association with ACTB mRNA and hence abolishes translational repression. Phosphorylation occurs in close proximity to filopodia and in the growth cones of differentiated neuroglioblastoma cells. In terms of tissue distribution, expressed in neurons and embryonic fibroblasts (at protein level).

It is found in the nucleus. The protein resides in the cytoplasm. Its subcellular location is the perinuclear region. It localises to the P-body. The protein localises to the stress granule. It is found in the cell projection. The protein resides in the growth cone. Its subcellular location is the filopodium. It localises to the lamellipodium. Its function is as follows. RNA-binding factor that recruits target transcripts to cytoplasmic protein-RNA complexes (mRNPs). This transcript 'caging' into mRNPs allows mRNA transport and transient storage. It also modulates the rate and location at which target transcripts encounter the translational apparatus and shields them from endonuclease attacks or microRNA-mediated degradation. Preferentially binds to N6-methyladenosine (m6A)-containing mRNAs and increases their stability. Plays a direct role in the transport and translation of transcripts required for axonal regeneration in adult sensory neurons. Regulates localized beta-actin/ACTB mRNA translation in polarized cells, a crucial process for cell migration and neurite outgrowth. Co-transcriptionally associates with the ACTB mRNA in the nucleus. This binding involves by a conserved 54-nucleotide element in the ACTB mRNA 3'-UTR, known as the 'zipcode'. The ribonucleoparticle (RNP) thus formed is exported to the cytoplasm, binds to a motor protein and is transported along the cytoskeleton to the cell periphery. During transport, IGF2BP1 prevents beta-actin mRNA from being translated into protein. When the RNP complex reaches its destination near the plasma membrane, IGF2BP1 is phosphorylated by SRC. This releases the mRNA, allowing ribosomal 40S and 60S subunits to assemble and initiate ACTB protein synthesis. The monomeric ACTB protein then assembles into the subcortical actin cytoskeleton, which pushes the leading edge onwards. Binds MYC mRNA. Binding to MYC mRNA is enhanced by m6A-modification of the CRD. Promotes the directed movement of cells by fine-tuning intracellular signaling networks. Binds to MAPK4 3'-UTR and inhibits its translation. Interacts with PTEN transcript open reading frame (ORF) and prevents mRNA decay. This combined action on MAPK4 (down-regulation) and PTEN (up-regulation) antagonizes HSPB1 phosphorylation, consequently it prevents G-actin sequestration by phosphorylated HSPB1, allowing F-actin polymerization. Hence enhances the velocity of cell migration and stimulates directed cell migration by PTEN-modulated polarization. The sequence is that of Insulin-like growth factor 2 mRNA-binding protein 1 (IGF2BP1) from Gallus gallus (Chicken).